The following is a 233-amino-acid chain: Protein Thf1 (233 aa).

Residues 183 to 205 (DKLSKDLELYRSNLDKMTQALAV) are a coiled coil. A disordered region spans residues 213–233 (DRKKREQRQQQASTPVAPPNE).

This sequence belongs to the THF1 family.

May be involved in photosynthetic membrane biogenesis. The sequence is that of Protein Thf1 from Trichormus variabilis (strain ATCC 29413 / PCC 7937) (Anabaena variabilis).